We begin with the raw amino-acid sequence, 556 residues long: Phenylalanine--tRNA ligase beta subunit (556 aa).

The region spanning 278–353 (LTPKRFEVEL…IAYGYNNIEP (76 aa)) is the B5 domain. Positions 331, 337, 340, and 341 each coordinate Mg(2+).

The protein belongs to the phenylalanyl-tRNA synthetase beta subunit family. Type 2 subfamily. Tetramer of two alpha and two beta subunits. Mg(2+) is required as a cofactor.

The protein resides in the cytoplasm. It carries out the reaction tRNA(Phe) + L-phenylalanine + ATP = L-phenylalanyl-tRNA(Phe) + AMP + diphosphate + H(+). The protein is Phenylalanine--tRNA ligase beta subunit of Pyrococcus abyssi (strain GE5 / Orsay).